The sequence spans 704 residues: MHTFFIAPTGFGVGLTSISLGLLRALERAGLKVGFFKPIAQLHPGDLGPERSSELVARTHGLDTPKPLPLAQVERMLGDGQLDELLEEIISLYQRAAADKDVVIVEGMVPTRHASYAARVNFHLAKSLDAEVILVSAPENETLTELTDRIEIQAQLFGGPRDPKVLGVILNKVRGEADAANAEDGVADFARRLTEHSPLLRDDFRLIGCIPWQDELNAARTRDIADLLSARVINAGDYEQRRVQKIVLCARAVPNTVQLLKPGVLVVTPGDRDDIILAASLAAMNGVPLAGLLLCSDFPPDPRIMELCRGALQGGLPVLSVATGSYDTATNLNRMNKEIPVDDRERAERVTEFVAGHIDFEWLKQRCGTPRELRLSPPAFRYQVVQRAQKAGKRIVLPEGSEPRTVQAAAICQARGIARCVLLAKPEEVQAVAQAQGIVLPEGLEIIDPDLVRQRYVEPMVELRKGKGLNAPMAEQQLEDSVVLATMMLALDEVDGLVSGAIHTTASTIRPALQLIKTAPGYNLVSSVFFMLLPDQVLVYGDCAVNPDPSASDLAEIAVQSAASAQAFGIPARVAMISYSTGDSGSGVDVDKVREATRLAREQRPDLLIDGPLQYDAAAIASVGRQKAPNSPVAGQATVFIFPDLNTGNTTYKAVQRSADCVSVGPMLQGLRKPVNDLSRGALVEDIVYTIALTAIQADAQAPA.

A phosphate acetyltransferase region spans residues Ala379 to Ala704.

The protein in the N-terminal section; belongs to the CobB/CobQ family. In the C-terminal section; belongs to the phosphate acetyltransferase and butyryltransferase family. As to quaternary structure, homohexamer.

The protein localises to the cytoplasm. It catalyses the reaction acetyl-CoA + phosphate = acetyl phosphate + CoA. It participates in metabolic intermediate biosynthesis; acetyl-CoA biosynthesis; acetyl-CoA from acetate: step 2/2. Activity is increased under anaerobic growth conditions. Its function is as follows. Involved in acetate metabolism. In combination with LdhA and AckA, allows fermentation of pyruvate, enhancing long-term survival under anaerobic conditions. In Pseudomonas aeruginosa (strain ATCC 15692 / DSM 22644 / CIP 104116 / JCM 14847 / LMG 12228 / 1C / PRS 101 / PAO1), this protein is Phosphate acetyltransferase (pta).